A 388-amino-acid chain; its full sequence is Muscleblind-like protein 1 (388 aa).

Thr-6 carries the post-translational modification Phosphothreonine. C3H1-type zinc fingers lie at residues 13 to 41 (WLTL…HPSK), 47 to 73 (NGRV…HPPP), 179 to 207 (TDRL…HPAD), and 215 to 241 (DNTV…HPPA).

It belongs to the muscleblind family. In terms of assembly, interacts with DDX1 and YBX1. Interacts with HNRNPH1; the interaction in RNA-independent. Interacts with RBPMS; the interaction allows cooperative assembly of RNA-bound stable cell-specific alternative splicing regulatory complexes. In terms of tissue distribution, highly expressed in cardiac, skeletal muscle and during myoblast differentiation. Weakly expressed in other tissues (at protein level). Expressed in heart, brain, placenta, lung, liver, skeletal muscle, kidney and pancreas.

The protein localises to the nucleus. Its subcellular location is the cytoplasm. It localises to the cytoplasmic granule. In terms of biological role, mediates pre-mRNA alternative splicing regulation. Acts either as activator or repressor of splicing on specific pre-mRNA targets. Inhibits cardiac troponin-T (TNNT2) pre-mRNA exon inclusion but induces insulin receptor (IR) pre-mRNA exon inclusion in muscle. Antagonizes the alternative splicing activity pattern of CELF proteins. Regulates the TNNT2 exon 5 skipping through competition with U2AF2. Inhibits the formation of the spliceosome A complex on intron 4 of TNNT2 pre-mRNA. Binds to the stem-loop structure within the polypyrimidine tract of TNNT2 intron 4 during spliceosome assembly. Binds to the 5'-YGCU(U/G)Y-3'consensus sequence. Binds to the IR RNA. Binds to expanded CUG repeat RNA, which folds into a hairpin structure containing GC base pairs and bulged, unpaired U residues. Together with RNA binding proteins RBPMS and RBFOX2, activates vascular smooth muscle cells alternative splicing events. Regulates NCOR2 alternative splicing. The chain is Muscleblind-like protein 1 (MBNL1) from Homo sapiens (Human).